Consider the following 492-residue polypeptide: B3 domain-containing protein REM3 (492 aa).

The TF-B3 1 DNA-binding region spans 12–104; the sequence is NRPFFVRSLA…VFHVTPSGRS (93 aa). Positions 105 to 116 are enriched in low complexity; sequence FSQIRTSSSSGD. The interval 105-134 is disordered; the sequence is FSQIRTSSSSGDYDSDDDDDEAGDDDSDSK. The span at 117–131 shows a compositional bias: acidic residues; sequence YDSDDDDDEAGDDDS. 2 DNA-binding regions (TF-B3) span residues 154 to 250 and 286 to 382; these read YCLL…LCFK and FLTV…FCSE. Positions 385–395 are enriched in basic and acidic residues; it reads IEQEEAPEERG. The segment at 385–427 is disordered; sequence IEQEEAPEERGTPLPKRARVSAEVGHSRRTQAPNKSSDDPKIL.

The protein resides in the nucleus. This Arabidopsis thaliana (Mouse-ear cress) protein is B3 domain-containing protein REM3 (REM3).